A 223-amino-acid chain; its full sequence is Pyridoxine/pyridoxamine 5'-phosphate oxidase (223 aa).

Substrate is bound by residues Arg13 to Tyr16 and Lys73. FMN contacts are provided by residues Arg68–Lys73, Tyr83–Thr84, Lys90, and Gln112. Positions 130, 134, and 138 each coordinate substrate. Residues Gln147 to Ser148 and Trp193 each bind FMN. Substrate is bound at residue Arg199–His201. Arg203 lines the FMN pocket.

This sequence belongs to the pyridoxamine 5'-phosphate oxidase family. As to quaternary structure, homodimer. The cofactor is FMN.

The catalysed reaction is pyridoxamine 5'-phosphate + O2 + H2O = pyridoxal 5'-phosphate + H2O2 + NH4(+). It catalyses the reaction pyridoxine 5'-phosphate + O2 = pyridoxal 5'-phosphate + H2O2. Its pathway is cofactor metabolism; pyridoxal 5'-phosphate salvage; pyridoxal 5'-phosphate from pyridoxamine 5'-phosphate: step 1/1. The protein operates within cofactor metabolism; pyridoxal 5'-phosphate salvage; pyridoxal 5'-phosphate from pyridoxine 5'-phosphate: step 1/1. Its function is as follows. Catalyzes the oxidation of either pyridoxine 5'-phosphate (PNP) or pyridoxamine 5'-phosphate (PMP) into pyridoxal 5'-phosphate (PLP). The polypeptide is Pyridoxine/pyridoxamine 5'-phosphate oxidase (Rhodopirellula baltica (strain DSM 10527 / NCIMB 13988 / SH1)).